The primary structure comprises 490 residues: ATP synthase subunit beta, chloroplastic (490 aa).

170-177 (GGAGVGKT) lines the ATP pocket.

The protein belongs to the ATPase alpha/beta chains family. In terms of assembly, F-type ATPases have 2 components, CF(1) - the catalytic core - and CF(0) - the membrane proton channel. CF(1) has five subunits: alpha(3), beta(3), gamma(1), delta(1), epsilon(1). CF(0) has four main subunits: a(1), b(1), b'(1) and c(9-12).

It localises to the plastid. Its subcellular location is the chloroplast thylakoid membrane. The enzyme catalyses ATP + H2O + 4 H(+)(in) = ADP + phosphate + 5 H(+)(out). Its function is as follows. Produces ATP from ADP in the presence of a proton gradient across the membrane. The catalytic sites are hosted primarily by the beta subunits. This chain is ATP synthase subunit beta, chloroplastic, found in Ipomoea setosa (Brazilian morning glory).